Consider the following 238-residue polypeptide: MIAFIVLLSLAAVLQQSSGTVDFASESSNKKDYRKEIVDKHNALRRSVKPTARNMLQMEWNSHAAQNAKRWADRCTFAHSPPHTRTVGQLRCGENIFMSSQPFAWSGVVQAWYDEVKKFVYGIGAKPPGSVIGHYTQVVWYKSHLLGCASAKCSSTKYLYVCQYCPAGNIRGSIATPYKSGPTCGDCPSACVNGLCTNPCKYEDAFTNCNELAKETKCKTEWIKSKCPATCFCHTEII.

An N-terminal signal peptide occupies residues 1-19; sequence MIAFIVLLSLAAVLQQSSG. One can recognise an SCP domain in the interval 38-164; sequence VDKHNALRRS…STKYLYVCQY (127 aa). Disulfide bonds link cysteine 75/cysteine 153, cysteine 92/cysteine 165, cysteine 148/cysteine 162, cysteine 184/cysteine 191, cysteine 187/cysteine 196, cysteine 200/cysteine 233, cysteine 209/cysteine 227, and cysteine 218/cysteine 231. The ShKT domain maps to 200–233; that stretch reads CKYEDAFTNCNELAKETKCKTEWIKSKCPATCFC.

The protein belongs to the CRISP family. In terms of tissue distribution, expressed by the venom gland.

It is found in the secreted. Blocks olfactory (CNGA2) and retinal (CNGA1) CNG channel currents. Does not affect neither depolarization- nor caffeine-induced contraction of smooth muscle. This Drysdalia coronoides (White-lipped snake) protein is Cysteine-rich venom protein.